The chain runs to 189 residues: Protein GrpE (189 aa).

Residues 1–37 (MSDSSKEKKKKFADMVSRQKGDDQQSDNHKQTDDLNE) form a disordered region. Basic and acidic residues predominate over residues 17 to 33 (SRQKGDDQQSDNHKQTD).

The protein belongs to the GrpE family. Homodimer.

It localises to the cytoplasm. Participates actively in the response to hyperosmotic and heat shock by preventing the aggregation of stress-denatured proteins, in association with DnaK and GrpE. It is the nucleotide exchange factor for DnaK and may function as a thermosensor. Unfolded proteins bind initially to DnaJ; upon interaction with the DnaJ-bound protein, DnaK hydrolyzes its bound ATP, resulting in the formation of a stable complex. GrpE releases ADP from DnaK; ATP binding to DnaK triggers the release of the substrate protein, thus completing the reaction cycle. Several rounds of ATP-dependent interactions between DnaJ, DnaK and GrpE are required for fully efficient folding. This Wolbachia pipientis wMel protein is Protein GrpE.